The sequence spans 332 residues: 5-formaminoimidazole-4-carboxamide-1-(beta)-D-ribofuranosyl 5'-monophosphate synthetase (332 aa).

2 residues coordinate 5-amino-1-(5-phospho-beta-D-ribosyl)imidazole-4-carboxamide: histidine 9 and serine 72. An ATP-grasp domain is found at 93–323 (RNLFPWESNQ…IGREINLAIQ (231 aa)). Residues 123-183 (PEDV…IPMY) and glutamate 205 each bind ATP. Asparagine 229 is a 5-amino-1-(5-phospho-beta-D-ribosyl)imidazole-4-carboxamide binding site. Positions 268 and 281 each coordinate Mg(2+).

Belongs to the phosphohexose mutase family. Requires Mg(2+) as cofactor. Mn(2+) is required as a cofactor.

The catalysed reaction is 5-amino-1-(5-phospho-beta-D-ribosyl)imidazole-4-carboxamide + formate + ATP = 5-formamido-1-(5-phospho-D-ribosyl)imidazole-4-carboxamide + ADP + phosphate. Its pathway is purine metabolism; IMP biosynthesis via de novo pathway; 5-formamido-1-(5-phospho-D-ribosyl)imidazole-4-carboxamide from 5-amino-1-(5-phospho-D-ribosyl)imidazole-4-carboxamide (formate route): step 1/1. Its function is as follows. Catalyzes the ATP- and formate-dependent formylation of 5-aminoimidazole-4-carboxamide-1-beta-d-ribofuranosyl 5'-monophosphate (AICAR) to 5-formaminoimidazole-4-carboxamide-1-beta-d-ribofuranosyl 5'-monophosphate (FAICAR) in the absence of folates. The sequence is that of 5-formaminoimidazole-4-carboxamide-1-(beta)-D-ribofuranosyl 5'-monophosphate synthetase from Metallosphaera sedula (strain ATCC 51363 / DSM 5348 / JCM 9185 / NBRC 15509 / TH2).